A 346-amino-acid polypeptide reads, in one-letter code: Calcium uniporter protein, mitochondrial (346 aa).

Residues 1–195 lie on the Mitochondrial matrix side of the membrane; that stretch reads MTKGKLLTTP…ECDKAAHRGA (195 aa). The segment at 55–120 is disordered; it reads ELPPPDPQDS…GEGKDEGEFV (66 aa). 2 stretches are compositionally biased toward basic and acidic residues: residues 76–91 and 109–119; these read MEAK…KADT and REGEGKDEGEF. The helical transmembrane segment at 196–216 threads the bilayer; the sequence is QRIALAGCGGLIGYWYIVYRL. The Mitochondrial intermembrane portion of the chain corresponds to 217 to 226; the sequence is TFETDLGWDV. The short motif at 224–232 is the Selectivity filter element; the sequence is WDVMEPVTY. The helical transmembrane segment at 227–248 threads the bilayer; sequence MEPVTYLVGLSTLIGGYMWFLW. Glu228 contributes to the Ca(2+) binding site. Residues 249-346 are Mitochondrial matrix-facing; the sequence is HNREVSYRSA…KEGEEDDEDD (98 aa). The interval 306–346 is disordered; the sequence is WNETQDEGGDEKVTKALRDERKNNNGTKNKSKEGEEDDEDD. Positions 315–328 are enriched in basic and acidic residues; sequence DEKVTKALRDERKN.

It belongs to the MCU (TC 1.A.77) family. Homotetramer, assembles in a dimer or dimers configuration with two interfaces.

It localises to the mitochondrion inner membrane. It catalyses the reaction Ca(2+)(in) = Ca(2+)(out). In terms of biological role, highly selective calcium channel localized to the inner mitochondrial membrane, which mediates calcium uptake into the mitochondrial matrix. Mitochondrial calcium homeostasis plays key roles in cellular physiology and regulates ATP production, cytoplasmic calcium signals and activation of cell death pathways. Sufficient to operate as a pore-forming channel without the need of calcium-sensor or auxiliary subunit. In Cyphellophora europaea (strain CBS 101466) (Phialophora europaea), this protein is Calcium uniporter protein, mitochondrial.